Consider the following 608-residue polypeptide: MRHLKLTGFIFFLLSLTESLALPTKPQDVDHFNATQKFINENVAYLTIIASAQYVQEASFEEVEMLVKVMLDYKDRCLADSTLPECSKIANDAIQDMLCDMKGLPQKHNFSHCCRQAGFQRRLCFFYNKKANVGFLPPFPTLDPEEKCQAYKNNSESFLNLYMYEVARRNPFAFAPVLLNVAARFEEAATTCCEQQQKATYFQDKAAPITQYLKALSSYQRNVCGALLKFGPKTLNSINIAVFSKKFPKIGFEDLTSLLEDVSSMYDGCCEGDVVQCIRSQSQVMHHICSKQDSISSKIKACCEKKLPERADCIINANKDDRPEDLSLRTPKFTDSENVCQERDSEQDKFFAEFLYDYSRRHTELSTPELLRITKVYKDLLEDCCNRKNPLSCYRHAEDKFNETTERSLAMVQQECKQFQELGKDALQRHFLVKFTKAAPQLPMEELVSLSKEMVAALATCCTLSDEFACVDNLADLVLGELCGMNKNRTINPTVDHCCRADFAFRRPCFEHLKADTTYALPSVSALVSALRADWCQPLKEDLQNKRHRFLVNLVKWMPEITDEERLCLFTKFTAAGEECGNIQKPEACFSPESSKTGDVSQDAEKQR.

The N-terminal stretch at 1 to 21 (MRHLKLTGFIFFLLSLTESLA) is a signal peptide. Albumin domains follow at residues 22–210 (LPTK…APIT), 211–403 (QYLK…KFNE), and 404–599 (TTER…KTGD). N-linked (GlcNAc...) asparagine glycosylation is present at Asn33. 10 cysteine pairs are disulfide-bonded: Cys77–Cys86, Cys99–Cys114, Cys113–Cys124, Cys148–Cys193, Cys224–Cys270, Cys269–Cys277, Cys289–Cys303, Cys302–Cys313, Cys340–Cys385, and Cys384–Cys393. An N-linked (GlcNAc...) asparagine glycan is attached at Asn109. A glycan (N-linked (GlcNAc...) asparagine) is linked at Asn153. Residues 215 to 319 (ALSSYQRNVC…RADCIINANK (105 aa)) are binding pocket for hydrophobic ligands. A glycan (N-linked (GlcNAc...) asparagine) is linked at Asn402. Disulfide bonds link Cys416-Cys462, Cys461-Cys470, Cys483-Cys499, Cys498-Cys509, and Cys580-Cys589. An N-linked (GlcNAc...) asparagine glycan is attached at Asn488. A disordered region spans residues 585–608 (KPEACFSPESSKTGDVSQDAEKQR).

This sequence belongs to the ALB/AFP/VDB family. In terms of assembly, forms a 1:1 complex with Wnt family members; interacts with WNT1, WNT2B, WNT3, WNT3A, WNT5A, WNT7A, WNT7B, WNT8, WNT9A, WNT9B, WNT10A and WNT10B. N-glycosylated; more than 90% of the glycans are sialylated.

The protein resides in the secreted. In terms of biological role, functions as a carrier for hydrophobic molecules in body fluids. Essential for the solubility and activity of lipidated Wnt family members, including WNT1, WNT2B, WNT3, WNT3A, WNT5A, WNT7A, WNT7B, WNT8, WNT9A, WNT9B, WNT10A and WNT10B. Binds vitamin E. May transport vitamin E in body fluids under conditions where the lipoprotein system is not sufficient. May be involved in the transport of vitamin E across the blood-brain barrier. This Rattus norvegicus (Rat) protein is Afamin (Afm).